The primary structure comprises 458 residues: D-inositol 3-phosphate glycosyltransferase (458 aa).

The tract at residues 1 to 29 is disordered; it reads MRADRPGHRSRGINPGPGMFTLVGPDERD. Histidine 47 is a binding site for 1D-myo-inositol 3-phosphate. Residues 53–54 and glycine 61 each bind UDP-N-acetyl-alpha-D-glucosamine; that span reads QP. 1D-myo-inositol 3-phosphate is bound by residues 58-63, lysine 116, tyrosine 149, threonine 173, and arginine 193; that span reads DAGGMN. Arginine 267, lysine 272, and valine 339 together coordinate UDP-N-acetyl-alpha-D-glucosamine. Alanine 351 provides a ligand contact to Mg(2+). Residues glutamate 361 and glutamate 369 each contribute to the UDP-N-acetyl-alpha-D-glucosamine site. Threonine 375 serves as a coordination point for Mg(2+).

Belongs to the glycosyltransferase group 1 family. MshA subfamily. Homodimer.

The catalysed reaction is 1D-myo-inositol 3-phosphate + UDP-N-acetyl-alpha-D-glucosamine = 1D-myo-inositol 2-acetamido-2-deoxy-alpha-D-glucopyranoside 3-phosphate + UDP + H(+). In terms of biological role, catalyzes the transfer of a N-acetyl-glucosamine moiety to 1D-myo-inositol 3-phosphate to produce 1D-myo-inositol 2-acetamido-2-deoxy-glucopyranoside 3-phosphate in the mycothiol biosynthesis pathway. This chain is D-inositol 3-phosphate glycosyltransferase, found in Nocardioides sp. (strain ATCC BAA-499 / JS614).